Reading from the N-terminus, the 296-residue chain is GTPase Era (296 aa).

The 168-residue stretch at 3-170 (KSGFVTIVGR…KELMFKYIPE (168 aa)) folds into the Era-type G domain. The G1 stretch occupies residues 11-18 (GRPNVGKS). GTP is bound at residue 11-18 (GRPNVGKS). Residues 37–41 (QTTRN) are G2. The interval 58–61 (DTPG) is G3. GTP-binding positions include 58–62 (DTPGI) and 120–123 (NKID). The interval 120-123 (NKID) is G4. A G5 region spans residues 149 to 151 (ISA). The KH type-2 domain maps to 201–278 (LSEEVPHGIA…YIRLWVKVKE (78 aa)).

Belongs to the TRAFAC class TrmE-Era-EngA-EngB-Septin-like GTPase superfamily. Era GTPase family. Monomer.

The protein resides in the cytoplasm. It is found in the cell membrane. Its function is as follows. An essential GTPase that binds both GDP and GTP, with rapid nucleotide exchange. Plays a role in 16S rRNA processing and 30S ribosomal subunit biogenesis and possibly also in cell cycle regulation and energy metabolism. The chain is GTPase Era from Clostridium botulinum (strain Loch Maree / Type A3).